The following is a 327-amino-acid chain: Mitochondrial thiamine pyrophosphate carrier 1 (327 aa).

3 Solcar repeats span residues 13-114 (GSKL…AAQL), 126-214 (PAAA…LRAP), and 222-317 (FWGG…VLRA). 6 helical membrane-spanning segments follow: residues 16–36 (LQVV…IAPL), 95–111 (LLYI…YRSA), 132–152 (FVAG…LDLL), 189–209 (GIGP…AAYE), 223–245 (WGGQ…VFPL), and 292–309 (GLTV…VTMW).

This sequence belongs to the mitochondrial carrier (TC 2.A.29) family.

The protein localises to the mitochondrion inner membrane. Mitochondrial transporter that mediates uptake of thiamine pyrophosphate (ThPP) into mitochondria. This chain is Mitochondrial thiamine pyrophosphate carrier 1 (TPC1), found in Pyricularia oryzae (strain 70-15 / ATCC MYA-4617 / FGSC 8958) (Rice blast fungus).